The following is a 393-amino-acid chain: Transcription factor bHLH112 (393 aa).

Disordered regions lie at residues 248–277 (TRAQ…SPLP) and 332–356 (KQGA…NENH). A compositionally biased stretch (basic and acidic residues) spans 254-265 (SLKRAKDNESAA). Residues 270-319 (VTTPSPLPTFKVRKENLRDQITSLQQLVSPFGKTDTASVLQEAIEYIKFL) enclose the bHLH domain. The segment covering 332–347 (KQGASNQQQQQISGKS) has biased composition (low complexity).

As to quaternary structure, homodimer.

The protein localises to the nucleus. The protein is Transcription factor bHLH112 (BHLH112) of Arabidopsis thaliana (Mouse-ear cress).